A 162-amino-acid polypeptide reads, in one-letter code: Protein S40-4 (162 aa).

It belongs to the senescence regulator S40 family.

It localises to the cytoplasm. The polypeptide is Protein S40-4 (Arabidopsis thaliana (Mouse-ear cress)).